The chain runs to 963 residues: Reversion-inducing cysteine-rich protein with Kazal motifs (963 aa).

The N-terminal stretch at 1–28 (MAAAVAAWPWALFCLAAVPPLLSPGAAG) is a signal peptide. The Knot 1 repeat unit spans residues 31 to 78 (CCYHAKDNLMCRDVCEQILSSKSDSRLKHLLQRAPEYCPESMGEVWGC). The segment at 31-332 (CCYHAKDNLM…NAVEVSMLTC (302 aa)) is 5 X Knot repeats. A glycan (N-linked (GlcNAc...) asparagine) is linked at N80. 2 Knot repeats span residues 98–135 (CCEL…LFSC) and 145–191 (CCSY…LIHC). N-linked (GlcNAc...) asparagine glycosylation occurs at N194. Knot repeat units follow at residues 210–257 (CCDR…LWQC) and 286–332 (CCSK…MLTC). N-linked (GlcNAc...) asparagine glycosylation is found at N291 and N346. Kazal-like domains are found at residues 621–667 (KFTG…SCIS), 692–746 (SFGK…PCQP), and 749–783 (KSVE…HCQA). Cystine bridges form between C627–C652, C629–C648, C637–C665, C710–C729, C718–C744, and C755–C781. S936 carries GPI-anchor amidated serine lipidation. Residues 937–963 (PSVKVGPVLHCLFISFSFTLLKLMDYI) constitute a propeptide that is removed on maturation.

This sequence belongs to the RECK family. As to quaternary structure, interacts (via knot repeats) with WNT7A (via disordered linker region); the interaction is direct. Interacts (via knot repeats) with WNT7B (via disordered linker region); the interaction is direct. Interacts with ADGRA2; the interaction is direct. In terms of processing, localizes to the plasma membrane via its GPI-anchor. Released from the plasma membrane following cleavage of the GPI-anchor by GDPD5/GPE2.

It localises to the cell membrane. In terms of biological role, functions together with ADGRA2 to enable brain endothelial cells to selectively respond to Wnt7 signals (WNT7A or WNT7B). Plays a key role in Wnt7-specific responses: required for central nervous system (CNS) angiogenesis and blood-brain barrier regulation. Acts as a Wnt7-specific coactivator of canonical Wnt signaling by decoding Wnt ligands: acts by interacting specifically with the disordered linker region of Wnt7, thereby conferring ligand selectivity for Wnt7. ADGRA2 is then required to deliver RECK-bound Wnt7 to frizzled by assembling a higher-order RECK-ADGRA2-Fzd-LRP5-LRP6 complex. Also acts as a serine protease inhibitor. This is Reversion-inducing cysteine-rich protein with Kazal motifs from Gallus gallus (Chicken).